The chain runs to 450 residues: Guanine deaminase (450 aa).

The Zn(2+) site is built by H88 and H90. Substrate contacts are provided by residues 90-93 (HAPQ), 218-219 (RF), 245-248 (HLSE), and D335. H245 and D335 together coordinate Zn(2+).

This sequence belongs to the metallo-dependent hydrolases superfamily. ATZ/TRZ family. Zn(2+) serves as cofactor.

It catalyses the reaction guanine + H2O + H(+) = xanthine + NH4(+). The protein operates within purine metabolism; guanine degradation; xanthine from guanine: step 1/1. In terms of biological role, catalyzes the hydrolytic deamination of guanine, producing xanthine and ammonia. This is Guanine deaminase (guaD) from Dictyostelium discoideum (Social amoeba).